An 876-amino-acid polypeptide reads, in one-letter code: Eukaryotic translation initiation factor 3 subunit C (876 aa).

Disordered stretches follow at residues 1-25 and 154-233; these read MSRF…VVRA and SXFR…IREQ. Acidic residues predominate over residues 11-20; sequence SESESSSEDE. 2 stretches are compositionally biased toward basic and acidic residues: residues 154–172 and 182–192; these read SXFR…KDSS and KPIKEKPKPEP. Positions 206-219 are enriched in low complexity; the sequence is SMDWASSSSDSSFS. A PCI domain is found at 632–808; the sequence is FHMHINLELL…ECAILHRSEP (177 aa). Residues 839-876 form a disordered region; the sequence is FFQRGGAQRGEGRQRERPREGWNRRTRNRRRDDERADD. Residues 848-861 show a composition bias toward basic and acidic residues; sequence GEGRQRERPREGWN.

Belongs to the eIF-3 subunit C family. In terms of assembly, component of the eukaryotic translation initiation factor 3 (eIF-3) complex.

The protein resides in the cytoplasm. Component of the eukaryotic translation initiation factor 3 (eIF-3) complex, which is involved in protein synthesis of a specialized repertoire of mRNAs and, together with other initiation factors, stimulates binding of mRNA and methionyl-tRNAi to the 40S ribosome. The eIF-3 complex specifically targets and initiates translation of a subset of mRNAs involved in cell proliferation. The sequence is that of Eukaryotic translation initiation factor 3 subunit C from Bombyx mori (Silk moth).